Consider the following 171-residue polypeptide: Zinc finger A20 and AN1 domain-containing stress-associated protein 8 (171 aa).

The segment at 11–45 (PEGPILCINNCGFFGSAATMNMCSKCHKEMIMKQE) adopts an A20-type zinc-finger fold. Positions 17, 21, 33, 36, 112, 115, 126, 128, 133, 136, 142, and 144 each coordinate Zn(2+). Residues 106–152 (REGPNRCSTCRKRVGLTGFNCRCGNLYCAMHRYSDKHDCQFDYRTAA) form an AN1-type zinc finger.

Functionally, may be involved in environmental stress response. The sequence is that of Zinc finger A20 and AN1 domain-containing stress-associated protein 8 (SAP8) from Oryza sativa subsp. indica (Rice).